The following is a 383-amino-acid chain: Aurachin C monooxygenase/isomerase (383 aa).

Residues glycine 15, serine 47, valine 128, aspartate 285, and 295–299 (GQGGC) each bind FAD.

The cofactor is FAD.

It carries out the reaction aurachin C + NADH + O2 + H(+) = 4-hydroxy-2-methyl-3-oxo-4-[(2E,6E)-farnesyl]-3,4-dihydroquinoline 1-oxide + NAD(+) + H2O. The enzyme catalyses aurachin C + NADPH + O2 + H(+) = 4-hydroxy-2-methyl-3-oxo-4-[(2E,6E)-farnesyl]-3,4-dihydroquinoline 1-oxide + NADP(+) + H2O. The catalysed reaction is aurachin C + NADH + O2 + H(+) = aurachin C epoxide + NAD(+) + H2O. It catalyses the reaction aurachin C + NADPH + O2 + H(+) = aurachin C epoxide + NADP(+) + H2O. It carries out the reaction aurachin C epoxide = 2-hydroxy-1a-methyl-7a-[(2E,6E)-farnesyl]-1a,2-dihydrooxireno[2,3-b]quinolin-7(7aH)-one. The enzyme catalyses 2-hydroxy-1a-methyl-7a-[(2E,6E)-farnesyl]-1a,2-dihydrooxireno[2,3-b]quinolin-7(7aH)-one = 4-hydroxy-2-methyl-3-oxo-4-[(2E,6E)-farnesyl]-3,4-dihydroquinoline 1-oxide. Its function is as follows. Catalyzes the initial step in the conversion of aurachin C to aurachin B. Catalyzes the epoxidation of the C(2)-C(3) double bond of aurachin C, which is followed by a semipinacol rearrangement, causing migration of the farnesyl group from C(3) to C(4). Accepts both NADH and NADPH, but has a preference for NADH. In Stigmatella aurantiaca, this protein is Aurachin C monooxygenase/isomerase.